A 671-amino-acid polypeptide reads, in one-letter code: Probable potassium transport system protein Kup (671 aa).

Residues 1 to 43 (MSQIPSPNDPASTGAAPSSAAVPAGPSATPAPSPTAGFSLPGH) form a disordered region. A compositionally biased stretch (low complexity) spans 10-37 (PASTGAAPSSAAVPAGPSATPAPSPTAG). 12 helical membrane passes run 52–72 (LAAL…TSPL), 92–112 (VLGV…FKYM), 147–167 (LMLG…TPAI), 181–201 (PAME…LFLF), 209–229 (VGAV…VLGV), 255–275 (GWHG…GEAL), 291–311 (WLGL…ALLL), 323–343 (LLAP…AAIV), 381–401 (IYLP…VLGF), 407–427 (LASA…LLFH), 441–461 (AWPL…ANVV), and 465–485 (DGGW…STWK).

Belongs to the HAK/KUP transporter (TC 2.A.72) family.

It localises to the cell inner membrane. It catalyses the reaction K(+)(in) + H(+)(in) = K(+)(out) + H(+)(out). Functionally, transport of potassium into the cell. Likely operates as a K(+):H(+) symporter. The chain is Probable potassium transport system protein Kup from Anaeromyxobacter dehalogenans (strain 2CP-1 / ATCC BAA-258).